A 224-amino-acid polypeptide reads, in one-letter code: 7-cyano-7-deazaguanine synthase 1 (224 aa).

Position 10-20 (leucine 10–alanine 20) interacts with ATP. 4 residues coordinate Zn(2+): cysteine 189, cysteine 199, cysteine 202, and cysteine 205.

Belongs to the QueC family. It depends on Zn(2+) as a cofactor.

The enzyme catalyses 7-carboxy-7-deazaguanine + NH4(+) + ATP = 7-cyano-7-deazaguanine + ADP + phosphate + H2O + H(+). Its pathway is purine metabolism; 7-cyano-7-deazaguanine biosynthesis. In terms of biological role, catalyzes the ATP-dependent conversion of 7-carboxy-7-deazaguanine (CDG) to 7-cyano-7-deazaguanine (preQ(0)). The chain is 7-cyano-7-deazaguanine synthase 1 from Sphingopyxis alaskensis (strain DSM 13593 / LMG 18877 / RB2256) (Sphingomonas alaskensis).